A 523-amino-acid chain; its full sequence is Fidgetin-like protein 1 (523 aa).

The disordered stretch occupies residues 114-154; it reads PVQQAVKSRPEGQFPESRNNSTKKIDAQQYSSESSSQSGFG. Residues 141-151 are compositionally biased toward low complexity; that stretch reads QQYSSESSSQS. Residues A253 and 293-298 contribute to the ATP site; that span reads GTGKTL.

The protein belongs to the AAA ATPase family. Hexamer. Requires Mg(2+) as cofactor.

The catalysed reaction is ATP + H2O = ADP + phosphate + H(+). This chain is Fidgetin-like protein 1, found in Drosophila melanogaster (Fruit fly).